The chain runs to 78 residues: Holin (78 aa).

Over 1–6 (MNSKID) the chain is Cytoplasmic. The helical transmembrane segment at 7-23 (SAIPFIGSLTALISGYS) threads the bilayer. Residues 24-29 (LHEWAS) are Periplasmic-facing. Residues 30-46 (LFGILFGAVSVWIAYRK) traverse the membrane as a helical segment. At 47–78 (YKEDVQARKDELAYKMLVAKIEAKKLGIAIDE) the chain is on the cytoplasmic side.

The protein resides in the host cell inner membrane. In terms of biological role, accumulates harmlessly in the cytoplasmic membrane until it reaches a critical concentration that triggers the formation of nanometer-scale pores (pinholes) causing host cell membrane depolarization and endolysin refolding and release into the periplasmic space. Once the pinholin has permeabilized the host cell membrane, the SAR-endolysin is released into the periplasm and breaks down the peptidoglycan layer. Determines the precise timing of host cell lysis. Participates with the SAR-endolysin and the U-spanin protein in the sequential events which lead to the programmed host cell lysis releasing the mature viral particles from the host cell. The chain is Holin (hol) from Haemophilus influenzae (Bacteriophage HP1).